Consider the following 207-residue polypeptide: Ribosomal RNA small subunit methyltransferase G (207 aa).

Residues Gly73, Leu78, 124–125, and Arg139 each bind S-adenosyl-L-methionine; that span reads VE.

Belongs to the methyltransferase superfamily. RNA methyltransferase RsmG family.

The protein resides in the cytoplasm. It catalyses the reaction guanosine(527) in 16S rRNA + S-adenosyl-L-methionine = N(7)-methylguanosine(527) in 16S rRNA + S-adenosyl-L-homocysteine. Its function is as follows. Specifically methylates the N7 position of guanine in position 527 of 16S rRNA. The sequence is that of Ribosomal RNA small subunit methyltransferase G from Shigella dysenteriae serotype 1 (strain Sd197).